The following is a 273-amino-acid chain: Diaminopimelate epimerase (273 aa).

2 residues coordinate substrate: asparagine 11 and asparagine 60. Residue cysteine 69 is the Proton donor of the active site. Substrate is bound by residues 70–71 (GN), asparagine 181, and 199–200 (ER). The active-site Proton acceptor is cysteine 209. 210-211 (GT) serves as a coordination point for substrate.

It belongs to the diaminopimelate epimerase family. Homodimer.

The protein localises to the cytoplasm. It catalyses the reaction (2S,6S)-2,6-diaminopimelate = meso-2,6-diaminopimelate. It functions in the pathway amino-acid biosynthesis; L-lysine biosynthesis via DAP pathway; DL-2,6-diaminopimelate from LL-2,6-diaminopimelate: step 1/1. Functionally, catalyzes the stereoinversion of LL-2,6-diaminopimelate (L,L-DAP) to meso-diaminopimelate (meso-DAP), a precursor of L-lysine and an essential component of the bacterial peptidoglycan. This Helicobacter pylori (strain ATCC 700392 / 26695) (Campylobacter pylori) protein is Diaminopimelate epimerase.